The following is a 688-amino-acid chain: Methionine--tRNA ligase (688 aa).

The short motif at 13 to 23 is the 'HIGH' region element; it reads PYANGPIHIGH. Residues Cys-144, Cys-147, Cys-157, and Cys-160 each contribute to the Zn(2+) site. Positions 334-338 match the 'KMSKS' region motif; it reads KMSKS. Lys-337 serves as a coordination point for ATP. Positions 582-688 constitute a tRNA-binding domain; it reads DFAKIDLRVA…AGAVPGMRVR (107 aa).

This sequence belongs to the class-I aminoacyl-tRNA synthetase family. MetG type 1 subfamily. Homodimer. Requires Zn(2+) as cofactor.

Its subcellular location is the cytoplasm. It catalyses the reaction tRNA(Met) + L-methionine + ATP = L-methionyl-tRNA(Met) + AMP + diphosphate. In terms of biological role, is required not only for elongation of protein synthesis but also for the initiation of all mRNA translation through initiator tRNA(fMet) aminoacylation. This Ralstonia nicotianae (strain ATCC BAA-1114 / GMI1000) (Ralstonia solanacearum) protein is Methionine--tRNA ligase.